The chain runs to 313 residues: tRNA dimethylallyltransferase (313 aa).

8–15 (GPTGTGKS) serves as a coordination point for ATP. 10 to 15 (TGTGKS) serves as a coordination point for substrate.

Belongs to the IPP transferase family. As to quaternary structure, monomer. It depends on Mg(2+) as a cofactor.

The enzyme catalyses adenosine(37) in tRNA + dimethylallyl diphosphate = N(6)-dimethylallyladenosine(37) in tRNA + diphosphate. In terms of biological role, catalyzes the transfer of a dimethylallyl group onto the adenine at position 37 in tRNAs that read codons beginning with uridine, leading to the formation of N6-(dimethylallyl)adenosine (i(6)A). The polypeptide is tRNA dimethylallyltransferase (Mycolicibacterium gilvum (strain PYR-GCK) (Mycobacterium gilvum (strain PYR-GCK))).